Consider the following 160-residue polypeptide: SsrA-binding protein (160 aa).

Belongs to the SmpB family.

The protein localises to the cytoplasm. Its function is as follows. Required for rescue of stalled ribosomes mediated by trans-translation. Binds to transfer-messenger RNA (tmRNA), required for stable association of tmRNA with ribosomes. tmRNA and SmpB together mimic tRNA shape, replacing the anticodon stem-loop with SmpB. tmRNA is encoded by the ssrA gene; the 2 termini fold to resemble tRNA(Ala) and it encodes a 'tag peptide', a short internal open reading frame. During trans-translation Ala-aminoacylated tmRNA acts like a tRNA, entering the A-site of stalled ribosomes, displacing the stalled mRNA. The ribosome then switches to translate the ORF on the tmRNA; the nascent peptide is terminated with the 'tag peptide' encoded by the tmRNA and targeted for degradation. The ribosome is freed to recommence translation, which seems to be the essential function of trans-translation. In Yersinia pseudotuberculosis serotype O:1b (strain IP 31758), this protein is SsrA-binding protein.